Consider the following 420-residue polypeptide: UDP-N-acetylglucosamine 1-carboxyvinyltransferase (420 aa).

22–23 is a binding site for phosphoenolpyruvate; the sequence is KN. A UDP-N-acetyl-alpha-D-glucosamine-binding site is contributed by Arg92. The active-site Proton donor is the Cys116. Cys116 is modified (2-(S-cysteinyl)pyruvic acid O-phosphothioketal). Residues 121-125, Asp304, and Ile326 contribute to the UDP-N-acetyl-alpha-D-glucosamine site; that span reads RPVDQ.

It belongs to the EPSP synthase family. MurA subfamily.

It localises to the cytoplasm. The enzyme catalyses phosphoenolpyruvate + UDP-N-acetyl-alpha-D-glucosamine = UDP-N-acetyl-3-O-(1-carboxyvinyl)-alpha-D-glucosamine + phosphate. It participates in cell wall biogenesis; peptidoglycan biosynthesis. Its function is as follows. Cell wall formation. Adds enolpyruvyl to UDP-N-acetylglucosamine. The sequence is that of UDP-N-acetylglucosamine 1-carboxyvinyltransferase from Paraburkholderia xenovorans (strain LB400).